The sequence spans 1487 residues: Secretory phospholipase A2 receptor (1487 aa).

The first 26 residues, 1-26 (MVQWLAMLQLLWLQQLLLLGIHQGIA), serve as a signal peptide directing secretion. The Extracellular portion of the chain corresponds to 27–1396 (QDLTHIQEPS…AQPEKGLSHS (1370 aa)). In terms of domain architecture, Ricin B-type lectin spans 42-165 (KGIFIIQSES…SSGGDICEHP (124 aa)). 4 cysteine pairs are disulfide-bonded: C55–C68, C93–C110, C181–C207, and C195–C222. Residue N97 is glycosylated (N-linked (GlcNAc...) asparagine). Positions 176 to 224 (AHGMPCVFPFQFKGHWHHDCIREGQKEHLLWCATTSRYEEDEKWGFCPD) constitute a Fibronectin type-II domain. N239 carries N-linked (GlcNAc...) asparagine glycosylation. 6 C-type lectin domains span residues 241–357 (SSRI…YICK), 387–504 (FNRK…YICK), 524–643 (HGRF…MSLC), 673–797 (GLAS…WICR), 819–938 (YQNA…SICK), and 964–1095 (FNYK…GFVC). 10 disulfides stabilise this stretch: C263-C356, C333-C348, C408-C503, C480-C495, C617-C634, C699-C796, C774-C788, C840-C937, C914-C929, and C1066-C1086. The N-linked (GlcNAc...) asparagine glycan is linked to N928. N-linked (GlcNAc...) asparagine glycans are attached at residues N1107, N1122, and N1131. C-type lectin domains lie at 1120 to 1231 (YGNR…GAIC) and 1256 to 1377 (FKGN…FICK). 3 disulfides stabilise this stretch: C1208–C1222, C1279–C1376, and C1353–C1368. Residues 1397-1417 (IVPVTVTLTLIIALGIFMLCF) traverse the membrane as a helical segment. The Cytoplasmic portion of the chain corresponds to 1418-1487 (WIYKQKSDIF…HKGRPICISP (70 aa)). The Endocytosis signal signature appears at 1435–1441 (GSYYPTL). Residues 1463–1475 (DEEVRDAPATESK) are compositionally biased toward basic and acidic residues. A disordered region spans residues 1463–1487 (DEEVRDAPATESKRGHKGRPICISP).

As to quaternary structure, interacts with sPLA2-IB/PLA2G1B; this interaction mediates intracellular signaling as well as clearance of extracellular sPLA2-IB/PLA2G1B via endocytotic pathway. Interacts with sPLA2-X/PLA2G10; this interaction mediates sPLA2-X/PLA2G10 clearance and inactivation. Post-translationally, the secretory phospholipase A2 receptor form may be produced by the action of metalloproteinases. It contains all extracellular domains and only lacks transmembrane and cytosolic regions. It is however unclear whether this form is produced by proteolytic cleavage as suggested by some experiments reported by PubMed:11830583, or by alternative splicing. Widely expressed. Present in type II alveolar epithelial cells and a subset of splenic lymphocytes. Present at the surface of polymorphonuclear neutrophils (at protein level).

The protein resides in the cell membrane. It is found in the secreted. Receptor for secretory phospholipase A2 (sPLA2). Acts as a receptor for phospholipases sPLA2-IB/PLA2G1B, sPLA2-X/PLA2G10 and, with lower affinity, sPLA2-IIA/PLA2G2A. Also able to bind to snake PA2-like toxins. Although its precise function remains unclear, binding of sPLA2 to its receptor participates in both positive and negative regulation of sPLA2 functions as well as clearance of sPLA2. Binding of sPLA2-IB/PLA2G1B induces various effects depending on the cell type, such as activation of the mitogen-activated protein kinase (MAPK) cascade to induce cell proliferation, the production of lipid mediators, selective release of arachidonic acid in bone marrow-derived mast cells. In neutrophils, binding of sPLA2-IB/PLA2G1B can activate p38 MAPK to stimulate elastase release and cell adhesion. May be involved in responses in pro-inflammatory cytokine productions during endotoxic shock. Also has endocytic properties and rapidly internalizes sPLA2 ligands, which is particularly important for the clearance of extracellular sPLA2s to protect their potent enzymatic activities. The soluble secretory phospholipase A2 receptor form is circulating and acts as a negative regulator of sPLA2 functions by blocking the biological functions of sPLA2-IB/PLA2G1B and sPLA2-X/PLA2G10. In podocytes, binding of sPLA2-IB/PLA2G1B can regulate podocyte survival and glomerular homeostasis. The chain is Secretory phospholipase A2 receptor (Pla2r1) from Mus musculus (Mouse).